A 30-amino-acid chain; its full sequence is Urease subunit alpha (30 aa).

The protein belongs to the metallo-dependent hydrolases superfamily. Urease alpha subunit family. Heterotrimer of UreA (gamma), UreB (beta) and UreC (alpha) subunits. Three heterotrimers associate to form the active enzyme. Ni cation is required as a cofactor.

It localises to the cytoplasm. It carries out the reaction urea + 2 H2O + H(+) = hydrogencarbonate + 2 NH4(+). Its pathway is nitrogen metabolism; urea degradation; CO(2) and NH(3) from urea (urease route): step 1/1. The polypeptide is Urease subunit alpha (ureC) (Escherichia coli).